Reading from the N-terminus, the 298-residue chain is 2-dehydro-3-deoxy-D-arabinonate dehydratase (298 aa).

I86 contacts substrate. Mg(2+) contacts are provided by E148, E150, and D169. Positions 187 and 261 each coordinate substrate.

The protein belongs to the FAH family. Homotetramer. It depends on Mg(2+) as a cofactor. Ca(2+) serves as cofactor.

It carries out the reaction 2-dehydro-3-deoxy-D-arabinonate = 2,5-dioxopentanoate + H2O. In terms of biological role, participates in a pentose oxidation pathway that converts D-arabinonate to 2-oxoglutarate. The protein is 2-dehydro-3-deoxy-D-arabinonate dehydratase of Saccharolobus solfataricus (strain ATCC 35092 / DSM 1617 / JCM 11322 / P2) (Sulfolobus solfataricus).